Consider the following 147-residue polypeptide: Large ribosomal subunit protein uL15 (147 aa).

Residues 1–65 (MQLHELKPAP…PLQRRLPKRG (65 aa)) form a disordered region. Composition is skewed to gly residues over residues 21–31 (QGIGSGLGKTA) and 42–52 (SGGGVRPGFEG).

The protein belongs to the universal ribosomal protein uL15 family. As to quaternary structure, part of the 50S ribosomal subunit.

Functionally, binds to the 23S rRNA. The protein is Large ribosomal subunit protein uL15 of Heliobacterium modesticaldum (strain ATCC 51547 / Ice1).